The primary structure comprises 425 residues: D-amino acid dehydrogenase 2 (425 aa).

Position 3–17 (3–17) interacts with FAD; that stretch reads ITVVGAGIVGISTAY.

Belongs to the DadA oxidoreductase family. FAD is required as a cofactor.

The enzyme catalyses a D-alpha-amino acid + A + H2O = a 2-oxocarboxylate + AH2 + NH4(+). Its function is as follows. Oxidative deamination of D-amino acids. The polypeptide is D-amino acid dehydrogenase 2 (dadA2) (Ralstonia nicotianae (strain ATCC BAA-1114 / GMI1000) (Ralstonia solanacearum)).